Consider the following 382-residue polypeptide: Ribonuclease D (382 aa).

Positions 4 to 169 (ITTTAELASV…DVFAALDADL (166 aa)) constitute a 3'-5' exonuclease domain. The HRDC domain occupies 208-289 (KPKDLAVMME…QRGLARDPRE (82 aa)).

The protein belongs to the RNase D family. It depends on a divalent metal cation as a cofactor.

It localises to the cytoplasm. The catalysed reaction is Exonucleolytic cleavage that removes extra residues from the 3'-terminus of tRNA to produce 5'-mononucleotides.. Exonuclease involved in the 3' processing of various precursor tRNAs. Initiates hydrolysis at the 3'-terminus of an RNA molecule and releases 5'-mononucleotides. The chain is Ribonuclease D from Nitrobacter hamburgensis (strain DSM 10229 / NCIMB 13809 / X14).